We begin with the raw amino-acid sequence, 138 residues long: Acidic phospholipase A2 1 (138 aa).

The signal sequence occupies residues M1–G16. Intrachain disulfides connect C42-C131, C44-C60, C59-C111, C65-C138, C66-C104, C73-C97, and C91-C102. Residues Y43, G45, and G47 each contribute to the Ca(2+) site. H63 is a catalytic residue. D64 lines the Ca(2+) pocket. Residue D105 is part of the active site.

As to quaternary structure, monomer. It depends on Ca(2+) as a cofactor. As to expression, expressed by the venom gland.

It localises to the secreted. It carries out the reaction a 1,2-diacyl-sn-glycero-3-phosphocholine + H2O = a 1-acyl-sn-glycero-3-phosphocholine + a fatty acid + H(+). In terms of biological role, snake venom phospholipase that inhibits ADP- and collagen-induced human platelet aggregation. This inhibition is completely inhibited by abolition of catalytic activity in case of collagen as inducer and partially inhibited in case of ADP as inducer. PLA2 catalyzes the calcium-dependent hydrolysis of the 2-acyl groups in 3-sn-phosphoglycerides. The sequence is that of Acidic phospholipase A2 1 from Macrovipera lebetinus (Levantine viper).